We begin with the raw amino-acid sequence, 59 residues long: MAKTIKVTQTRSSIARLPKHKATLKGLGLRHIRHTVELIDTPAVRGMINQVSYMVKVEE.

The protein belongs to the universal ribosomal protein uL30 family. Part of the 50S ribosomal subunit.

The sequence is that of Large ribosomal subunit protein uL30 from Actinobacillus pleuropneumoniae serotype 7 (strain AP76).